The primary structure comprises 126 residues: 13 kDa ribonucleoprotein-associated protein (126 aa).

The protein belongs to the eukaryotic ribosomal protein eL8 family. In terms of assembly, component of the U3 snoRNP particle. Binds to the C'/D and B/C motifs in U3 snoRNA. Component of the 25S U4/U6.U5 tri-snRNP particle, a subcomplex of the spliceosome. Binds to the 5' stem-loop of U4 snRNA.

It localises to the nucleus. It is found in the nucleolus. Its function is as follows. Common component of the spliceosome and rRNA processing machinery. In association with the spliceosomal U4/U6.U5 tri-snRNP particle, required for splicing of pre-mRNA. In association with box C/D snoRNPs, required for processing of pre-ribosomal RNA (rRNA) and site-specific 2'-O-methylation of substrate RNAs. Essential for the accumulation and stability of U4 snRNA, U6 snRNA, and box C/D snoRNAs. The chain is 13 kDa ribonucleoprotein-associated protein (SNU13) from Candida glabrata (strain ATCC 2001 / BCRC 20586 / JCM 3761 / NBRC 0622 / NRRL Y-65 / CBS 138) (Yeast).